Consider the following 457-residue polypeptide: Siroheme synthase (457 aa).

The interval 1–204 (MDHLPIFCQL…ADAKAVSEIT (204 aa)) is precorrin-2 dehydrogenase /sirohydrochlorin ferrochelatase. NAD(+) contacts are provided by residues 22–23 (DV) and 43–44 (LA). Phosphoserine is present on serine 128. The tract at residues 216–457 (GEVVLVGAGP…RDKLNWFSNH (242 aa)) is uroporphyrinogen-III C-methyltransferase. An S-adenosyl-L-methionine-binding site is contributed by proline 225. Catalysis depends on aspartate 248, which acts as the Proton acceptor. The Proton donor role is filled by lysine 270. S-adenosyl-L-methionine-binding positions include 301 to 303 (GGD), isoleucine 306, 331 to 332 (TA), methionine 382, and glycine 411.

In the N-terminal section; belongs to the precorrin-2 dehydrogenase / sirohydrochlorin ferrochelatase family. It in the C-terminal section; belongs to the precorrin methyltransferase family.

It carries out the reaction uroporphyrinogen III + 2 S-adenosyl-L-methionine = precorrin-2 + 2 S-adenosyl-L-homocysteine + H(+). It catalyses the reaction precorrin-2 + NAD(+) = sirohydrochlorin + NADH + 2 H(+). The enzyme catalyses siroheme + 2 H(+) = sirohydrochlorin + Fe(2+). Its pathway is cofactor biosynthesis; adenosylcobalamin biosynthesis; precorrin-2 from uroporphyrinogen III: step 1/1. It participates in cofactor biosynthesis; adenosylcobalamin biosynthesis; sirohydrochlorin from precorrin-2: step 1/1. It functions in the pathway porphyrin-containing compound metabolism; siroheme biosynthesis; precorrin-2 from uroporphyrinogen III: step 1/1. The protein operates within porphyrin-containing compound metabolism; siroheme biosynthesis; siroheme from sirohydrochlorin: step 1/1. Its pathway is porphyrin-containing compound metabolism; siroheme biosynthesis; sirohydrochlorin from precorrin-2: step 1/1. Multifunctional enzyme that catalyzes the SAM-dependent methylations of uroporphyrinogen III at position C-2 and C-7 to form precorrin-2 via precorrin-1. Then it catalyzes the NAD-dependent ring dehydrogenation of precorrin-2 to yield sirohydrochlorin. Finally, it catalyzes the ferrochelation of sirohydrochlorin to yield siroheme. The polypeptide is Siroheme synthase (Citrobacter koseri (strain ATCC BAA-895 / CDC 4225-83 / SGSC4696)).